The chain runs to 292 residues: Protease HtpX (292 aa).

Helical transmembrane passes span 4–24 (IVLF…ILFL) and 32–52 (IYGL…LSLI). His139 is a binding site for Zn(2+). Residue Glu140 is part of the active site. His143 contributes to the Zn(2+) binding site. Helical transmembrane passes span 147–167 (GDMI…IFIS) and 193–213 (FVYF…ASII). Position 222 (Glu222) interacts with Zn(2+).

This sequence belongs to the peptidase M48B family. It depends on Zn(2+) as a cofactor.

It localises to the cell membrane. This is Protease HtpX from Buchnera aphidicola subsp. Acyrthosiphon pisum (strain 5A).